Reading from the N-terminus, the 115-residue chain is U3-lycotoxin-Ls1p (115 aa).

A signal peptide spans 1 to 20 (MKFVLLFGVLLVTLFSYSSA). A propeptide spanning residues 21-44 (EMFDDFDQADEDELLSLIEKEEAR) is cleaved from the precursor. 4 disulfides stabilise this stretch: cysteine 48-cysteine 63, cysteine 55-cysteine 72, cysteine 62-cysteine 87, and cysteine 74-cysteine 85.

This sequence belongs to the neurotoxin 19 (CSTX) family. 01 subfamily. In terms of tissue distribution, expressed by the venom gland.

The protein resides in the secreted. This is U3-lycotoxin-Ls1p from Lycosa singoriensis (Wolf spider).